The chain runs to 276 residues: CTD small phosphatase-like protein (276 aa).

The interval 1–25 (MDGPAIITQVTNPKEDEGRLPGAGE) is disordered. The FCP1 homology domain occupies 102–260 (LDYGKKCVVI…LDLIPFFEGL (159 aa)). Aspartate 112 functions as the 4-aspartylphosphate intermediate in the catalytic mechanism. The Mg(2+) site is built by aspartate 112, aspartate 114, and asparagine 223. The active-site Proton donor is the aspartate 114.

Interacts with REST. Monomer. Requires Mg(2+) as cofactor. As to expression, expression is restricted to non-neuronal tissues.

Its subcellular location is the nucleus. It carries out the reaction O-phospho-L-seryl-[protein] + H2O = L-seryl-[protein] + phosphate. It catalyses the reaction O-phospho-L-threonyl-[protein] + H2O = L-threonyl-[protein] + phosphate. Recruited by REST to neuronal genes that contain RE-1 elements, leading to neuronal gene silencing in non-neuronal cells. Preferentially catalyzes the dephosphorylation of 'Ser-5' within the tandem 7 residue repeats in the C-terminal domain (CTD) of the largest RNA polymerase II subunit POLR2A. Negatively regulates RNA polymerase II transcription, possibly by controlling the transition from initiation/capping to processive transcript elongation. The protein is CTD small phosphatase-like protein (CTDSPL) of Homo sapiens (Human).